The sequence spans 254 residues: Type III pantothenate kinase (254 aa).

6–13 is a binding site for ATP; it reads DVGNTNTT. Substrate-binding positions include Tyr-100 and 107 to 110; that span reads GADR. Asp-109 serves as the catalytic Proton acceptor. Asp-129 lines the K(+) pocket. Thr-132 provides a ligand contact to ATP. Thr-184 serves as a coordination point for substrate.

This sequence belongs to the type III pantothenate kinase family. Homodimer. It depends on NH4(+) as a cofactor. Requires K(+) as cofactor.

It is found in the cytoplasm. It carries out the reaction (R)-pantothenate + ATP = (R)-4'-phosphopantothenate + ADP + H(+). Its pathway is cofactor biosynthesis; coenzyme A biosynthesis; CoA from (R)-pantothenate: step 1/5. Functionally, catalyzes the phosphorylation of pantothenate (Pan), the first step in CoA biosynthesis. The protein is Type III pantothenate kinase of Anaeromyxobacter dehalogenans (strain 2CP-1 / ATCC BAA-258).